Reading from the N-terminus, the 444-residue chain is UDP-N-acetylmuramoylalanine--D-glutamate ligase (444 aa).

109 to 115 contributes to the ATP binding site; it reads GSNGKTT.

The protein belongs to the MurCDEF family.

It is found in the cytoplasm. It carries out the reaction UDP-N-acetyl-alpha-D-muramoyl-L-alanine + D-glutamate + ATP = UDP-N-acetyl-alpha-D-muramoyl-L-alanyl-D-glutamate + ADP + phosphate + H(+). Its pathway is cell wall biogenesis; peptidoglycan biosynthesis. Cell wall formation. Catalyzes the addition of glutamate to the nucleotide precursor UDP-N-acetylmuramoyl-L-alanine (UMA). In Bacteroides fragilis (strain ATCC 25285 / DSM 2151 / CCUG 4856 / JCM 11019 / LMG 10263 / NCTC 9343 / Onslow / VPI 2553 / EN-2), this protein is UDP-N-acetylmuramoylalanine--D-glutamate ligase.